Here is a 289-residue protein sequence, read N- to C-terminus: RNA-binding protein CP29B, chloroplastic (289 aa).

The N-terminal 62 residues, 1-62, are a transit peptide targeting the chloroplast; the sequence is MAASASSLAL…NSPASRFARN (62 aa). 2 positions are modified to phosphoserine: Ser-6 and Ser-12. Val-63 is subject to N-acetylvaline. The RRM 1 domain occupies 91 to 169; sequence LKLFVGNLPF…RPLRVNAGPP (79 aa). Residues 158 to 199 are disordered; the sequence is DGRPLRVNAGPPPPKREDGFSRGPRSSFGSSGSGYGGGGGSG. The linker (Gly-rich) stretch occupies residues 170 to 203; sequence PPKREDGFSRGPRSSFGSSGSGYGGGGGSGAGSG. Over residues 178 to 187 the composition is skewed to low complexity; it reads SRGPRSSFGS. Residues 188–199 show a composition bias toward gly residues; it reads SGSGYGGGGGSG. The region spanning 204–282 is the RRM 2 domain; it reads NRVYVGNLSW…RQIRVSEAEA (79 aa).

In terms of processing, ADP-ribosylated by the Pseudomonas syringae type III effector HopU1. ADP-ribosylation reduces the ability of the protein to bind RNA. Post-translationally, phosphorylated on tyrosine residues after treatment with abscisic acid (ABA). Phosphorylation may reduce the ability of the protein to bind RNA.

It is found in the plastid. The protein localises to the chloroplast. In terms of biological role, could be involved in splicing and/or processing of chloroplast RNA's. The polypeptide is RNA-binding protein CP29B, chloroplastic (Arabidopsis thaliana (Mouse-ear cress)).